The sequence spans 289 residues: MAFRQALQLAACGLAGGSAAVLFSAVAVGKPRAGGDAEPRPAEPPAWAGGARPGPGVWDPNWDRREPLSLINVRKRNVESGEEELASKLDHYKAKATRHIFLIRHSQYHVDGSLEKDRTLTPLGREQAELTGLRLASLGLKFNKIVHSSMTRAIETTDIISRHLPGVCKVSTDLLREGAPIEPDPPVSHWKPEAVQYYEDGARIEAAFRNYIHRADARQEEDSYEIFICHANVIRYIVCRALQFPPEGWLRLSLNNGSITHLVIRPNGRVALRTLGDTGFMPPDKITRS.

Residues 1–6 are Mitochondrial matrix-facing; it reads MAFRQA. Residues 7 to 29 form a helical membrane-spanning segment; sequence LQLAACGLAGGSAAVLFSAVAVG. Residues 30–289 lie on the Mitochondrial intermembrane side of the membrane; it reads KPRAGGDAEP…FMPPDKITRS (260 aa). Positions 32 to 59 are disordered; that stretch reads RAGGDAEPRPAEPPAWAGGARPGPGVWD. Positions 45 to 56 are enriched in low complexity; sequence PAWAGGARPGPG. The interaction with KEAP1 stretch occupies residues 77 to 82; that stretch reads NVESGE. A phosphoserine mark is found at Ser-80 and Ser-87. N6-acetyllysine occurs at positions 116, 144, and 191.

This sequence belongs to the phosphoglycerate mutase family. BPG-dependent PGAM subfamily. In terms of assembly, dimer. Forms a ternary complex with NFE2L2 and KEAP1. Interacts with BCL2L1 and MAP3K5. Upon TNF-induced necrosis, forms in complex with RIPK1, RIPK3 and MLKL; the formation of this complex leads to PGAM5 phosphorylation. Isoform 2, but not isoform 1, interacts with DNM1L; this interaction leads to DNM1L dephosphorylation and activation and eventually to mitochondria fragmentation. Both isoform 1 and isoform 2 are phosphorylated by the RIPK1/RIPK3 complex under necrotic conditions. This phosphorylation increases PGAM5 phosphatase activity. Post-translationally, proteolytically cleaved by PARL in response to loss of mitochondrial membrane potential.

The protein localises to the mitochondrion outer membrane. It localises to the mitochondrion inner membrane. The enzyme catalyses O-phospho-L-seryl-[protein] + H2O = L-seryl-[protein] + phosphate. The catalysed reaction is O-phospho-L-threonyl-[protein] + H2O = L-threonyl-[protein] + phosphate. Its function is as follows. Mitochondrial serine/threonine phosphatase that dephosphorylates various substrates and thus plays a role in different biological processes including cellular senescence or mitophagy. Modulates cellular senescence by regulating mitochondrial dynamics. Mechanistically, participates in mitochondrial fission through dephosphorylating DNM1L/DRP1. Additionally, dephosphorylates MFN2 in a stress-sensitive manner and consequently protects it from ubiquitination and degradation to promote mitochondrial network formation. Regulates mitophagy independent of PARKIN by interacting with and dephosphorylating FUNDC1, which interacts with LC3. Regulates anti-oxidative response by forming a tertiary complex with KEAP1 and NRF2. Regulates necroptosis by acting as a RIPK3 target and recruiting the RIPK1-RIPK3-MLKL necrosis 'attack' complex to mitochondria. This is Serine/threonine-protein phosphatase PGAM5, mitochondrial (PGAM5) from Homo sapiens (Human).